A 386-amino-acid chain; its full sequence is Putative prophage major tail sheath protein (386 aa).

It belongs to the myoviridae tail sheath protein family.

The protein resides in the secreted. This Pseudomonas aeruginosa (strain UCBPP-PA14) protein is Putative prophage major tail sheath protein.